Consider the following 671-residue polypeptide: DNA ligase (671 aa).

Residues 31–35 (DAEYD), 80–81 (SL), and E110 each bind NAD(+). The N6-AMP-lysine intermediate role is filled by K112. Residues R133, E167, K283, and K307 each contribute to the NAD(+) site. Zn(2+)-binding residues include C401, C404, C419, and C424. The region spanning 587-671 (EEELVFAGKT…YLPDEGGLNE (85 aa)) is the BRCT domain.

This sequence belongs to the NAD-dependent DNA ligase family. LigA subfamily. Requires Mg(2+) as cofactor. Mn(2+) serves as cofactor.

It carries out the reaction NAD(+) + (deoxyribonucleotide)n-3'-hydroxyl + 5'-phospho-(deoxyribonucleotide)m = (deoxyribonucleotide)n+m + AMP + beta-nicotinamide D-nucleotide.. Functionally, DNA ligase that catalyzes the formation of phosphodiester linkages between 5'-phosphoryl and 3'-hydroxyl groups in double-stranded DNA using NAD as a coenzyme and as the energy source for the reaction. It is essential for DNA replication and repair of damaged DNA. The protein is DNA ligase of Listeria innocua serovar 6a (strain ATCC BAA-680 / CLIP 11262).